A 194-amino-acid polypeptide reads, in one-letter code: NADH-quinone oxidoreductase subunit B (194 aa).

Over residues 1-11 the composition is skewed to pro residues; that stretch reads MGVIATPPPSV. The disordered stretch occupies residues 1–24; it reads MGVIATPPPSVQGPSSQVPSSAPI. The span at 12–21 shows a compositional bias: low complexity; sequence QGPSSQVPSS. Residues Cys72, Cys73, Cys137, and Cys167 each coordinate [4Fe-4S] cluster.

It belongs to the complex I 20 kDa subunit family. In terms of assembly, NDH-1 is composed of 14 different subunits. Subunits NuoB, C, D, E, F, and G constitute the peripheral sector of the complex. Requires [4Fe-4S] cluster as cofactor.

It is found in the cell inner membrane. It carries out the reaction a quinone + NADH + 5 H(+)(in) = a quinol + NAD(+) + 4 H(+)(out). Its function is as follows. NDH-1 shuttles electrons from NADH, via FMN and iron-sulfur (Fe-S) centers, to quinones in the respiratory chain. The immediate electron acceptor for the enzyme in this species is believed to be ubiquinone. Couples the redox reaction to proton translocation (for every two electrons transferred, four hydrogen ions are translocated across the cytoplasmic membrane), and thus conserves the redox energy in a proton gradient. This is NADH-quinone oxidoreductase subunit B from Rhodospirillum centenum (strain ATCC 51521 / SW).